We begin with the raw amino-acid sequence, 162 residues long: Regulator of sigma D (162 aa).

Belongs to the Rsd/AlgQ family. Interacts with RpoD.

It localises to the cytoplasm. Binds RpoD and negatively regulates RpoD-mediated transcription activation by preventing the interaction between the primary sigma factor RpoD with the catalytic core of the RNA polymerase and with promoter DNA. May be involved in replacement of the RNA polymerase sigma subunit from RpoD to RpoS during the transition from exponential growth to the stationary phase. The sequence is that of Regulator of sigma D from Salmonella arizonae (strain ATCC BAA-731 / CDC346-86 / RSK2980).